The sequence spans 157 residues: Nascent polypeptide-associated complex subunit alpha (157 aa).

The region spanning 6-71 is the NAC-A/B domain; the sequence is TTDESHIHKT…LGSPVNLHQL (66 aa). The segment covering 81–107 has biased composition (basic and acidic residues); sequence SSKDQEGPGLYDEIHSDPQEDGVKEAE. Positions 81–116 are disordered; it reads SSKDQEGPGLYDEIHSDPQEDGVKEAEEITVDPSDE. The region spanning 118–157 is the UBA domain; that stretch reads LSEEDIKLISSQVKASRNDIIKALVESEYDVVDAMMKLTK.

This sequence belongs to the NAC-alpha family.

It localises to the cytoplasm. The protein resides in the nucleus. In terms of biological role, may be involved in mitochondrial protein import by enhancing productive ribosome interactions with the outer mitochondrial membrane and blocks the inappropriate interaction of ribosomes translating non-secretory nascent polypeptides with translocation sites in the membrane of the endoplasmic reticulum. EGD2 may also be involved in transcription regulation. The sequence is that of Nascent polypeptide-associated complex subunit alpha (EGD2) from Encephalitozoon cuniculi (strain GB-M1) (Microsporidian parasite).